The sequence spans 128 residues: Fluoride-specific ion channel FluC (128 aa).

4 helical membrane passes run 3–23, 33–53, 69–89, and 99–119; these read LYALTAIGAGAALGAWLRWWF, TLPLGTLAANLTGGYLIGAAI, FAITGFLGGLTTFSTFSAETV, and WTFVIIFSHLTGSLVMTILGI. Na(+) is bound by residues glycine 76 and threonine 79.

Belongs to the fluoride channel Fluc/FEX (TC 1.A.43) family.

The protein resides in the cell inner membrane. It carries out the reaction fluoride(in) = fluoride(out). With respect to regulation, na(+) is not transported, but it plays an essential structural role and its presence is essential for fluoride channel function. Fluoride-specific ion channel. Important for reducing fluoride concentration in the cell, thus reducing its toxicity. The chain is Fluoride-specific ion channel FluC from Nitrosospira multiformis (strain ATCC 25196 / NCIMB 11849 / C 71).